Consider the following 361-residue polypeptide: S-adenosylmethionine:tRNA ribosyltransferase-isomerase (361 aa).

It belongs to the QueA family. In terms of assembly, monomer.

Its subcellular location is the cytoplasm. It catalyses the reaction 7-aminomethyl-7-carbaguanosine(34) in tRNA + S-adenosyl-L-methionine = epoxyqueuosine(34) in tRNA + adenine + L-methionine + 2 H(+). Its pathway is tRNA modification; tRNA-queuosine biosynthesis. In terms of biological role, transfers and isomerizes the ribose moiety from AdoMet to the 7-aminomethyl group of 7-deazaguanine (preQ1-tRNA) to give epoxyqueuosine (oQ-tRNA). This is S-adenosylmethionine:tRNA ribosyltransferase-isomerase from Rhizobium johnstonii (strain DSM 114642 / LMG 32736 / 3841) (Rhizobium leguminosarum bv. viciae).